The sequence spans 199 residues: Phosphoheptose isomerase (199 aa).

The region spanning 36–198 (MSQCLLNEHK…DRKLIPSSED (163 aa)) is the SIS domain. 51–53 (NGG) contacts substrate. The Zn(2+) site is built by H60 and E64. Substrate is bound by residues E64, 93–94 (ND), 119–121 (STS), S124, and Q174. Q174 and H182 together coordinate Zn(2+).

Belongs to the SIS family. GmhA subfamily. Homotetramer. Zn(2+) is required as a cofactor.

It is found in the cytoplasm. It catalyses the reaction 2 D-sedoheptulose 7-phosphate = D-glycero-alpha-D-manno-heptose 7-phosphate + D-glycero-beta-D-manno-heptose 7-phosphate. It participates in carbohydrate biosynthesis; D-glycero-D-manno-heptose 7-phosphate biosynthesis; D-glycero-alpha-D-manno-heptose 7-phosphate and D-glycero-beta-D-manno-heptose 7-phosphate from sedoheptulose 7-phosphate: step 1/1. Catalyzes the isomerization of sedoheptulose 7-phosphate in D-glycero-D-manno-heptose 7-phosphate. The chain is Phosphoheptose isomerase from Coxiella burnetii (strain RSA 331 / Henzerling II).